Here is a 177-residue protein sequence, read N- to C-terminus: uncharacterized protein (177 aa).

An N-terminal signal peptide occupies residues 1 to 22; the sequence is MCGVVVVIVALVPADPLLPAFA. Helical transmembrane passes span 31–51, 94–114, and 136–156; these read VFIP…TCVF, ISLM…LKFV, and LFPI…LLEI.

It is found in the membrane. This is an uncharacterized protein from Saccharomyces cerevisiae (strain ATCC 204508 / S288c) (Baker's yeast).